We begin with the raw amino-acid sequence, 396 residues long: Phosphopentomutase (396 aa).

Asp13, Asp288, His293, Asp329, His330, and His341 together coordinate Mn(2+).

This sequence belongs to the phosphopentomutase family. Mn(2+) is required as a cofactor.

The protein localises to the cytoplasm. The enzyme catalyses 2-deoxy-alpha-D-ribose 1-phosphate = 2-deoxy-D-ribose 5-phosphate. It catalyses the reaction alpha-D-ribose 1-phosphate = D-ribose 5-phosphate. It participates in carbohydrate degradation; 2-deoxy-D-ribose 1-phosphate degradation; D-glyceraldehyde 3-phosphate and acetaldehyde from 2-deoxy-alpha-D-ribose 1-phosphate: step 1/2. Isomerase that catalyzes the conversion of deoxy-ribose 1-phosphate (dRib-1-P) and ribose 1-phosphate (Rib-1-P) to deoxy-ribose 5-phosphate (dRib-5-P) and ribose 5-phosphate (Rib-5-P), respectively. This chain is Phosphopentomutase, found in Clostridium beijerinckii (strain ATCC 51743 / NCIMB 8052) (Clostridium acetobutylicum).